A 3637-amino-acid polypeptide reads, in one-letter code: MQSGFDRCLCTPNARVFWERGQVYCTRCLAARPLLPLSQQHPRLGALGLFYRPASPLSWEAPVTYPTKECRPGGMCWLSSIYPIARMTSGNHNFQARLNFIASVVYRDGKLTSKHLEEDFEVYSRGCRWYPITGPVPGIALYANAVHVSDESFPGATHVLSNLPLPQQPLRKGLCPFADARANVWRYKGNTVFVSPQGYLWTTGSNDSVPEPWGEDRRLCEKIISSLPADHLVKINFSNYPFDYSFTGGDGAGFVVFPCKERDTKFSKCWEKIFEDHSGWMAACEEADLADRMGYRTPAGVAGPYLARRLQVRGLRAVVKPENNDYIVWALGVPESYIRHVSRAGEPVEEFFVKVGEFSIVSNCVVTPHPKFRFQTRKYYGYSPPGDGACGLHCISAMLNDIFGDSFTTRLGKCSRDSSEWLSDQDLYQLVMTANLPATIGHCPSAIYKLDCVNQHWTVTKRKGDRAVGRLAPDCLRGVCGECEMGIHIGADTDLSPIVELQLAQDVSPRPGALLWFLELHELCVVDDDFAHAIARAGEEYRRAMGIPRDDWVILAELMTENCRTRHQVLEKLQRGLQLQASSRPSSPASVSPASSVDLSAAGLLLSGTESDKEAVVAVNDGCYTVLGFDKNEATKSEQDLATDLFCDLVKPMETSTTKLESRKILEAAAKALESCKPKRKRSRKKKTRTPSPTCSVDAAVAEPTSVNSLGNQDTRETCASEKKAEKCPTPTPPPRPKRAALKNSNSGCVLKDIIWNQTGPGVKCLTIVEDVRAFLKGITPPGGVLSTRSRITKHIVDHFHSICEQTPELVLAHAEHQAKNLHELLASETAKLILGIGEDPLKKLVGSQRSLPRRLGFGAWLGGQQKTSGGCGEREFKDVGRKSGAERTPSKRDLGVSLGDQLSQDGARRLSSSTACEIKESVPPIIDSGGGLSQKFMAWLNHQVFVLSSHLLAVWSFIFGSRQVLGVFDYVYTLFCLCCVLLCFYLPAIGFMTLVGCVFGSPWRVRLSVFSVWLCVAVVVFQEVLPEPGAVCTSASAERAAALERYTSNGVHRPVNHLSVGLVGTVAGFVARSVGGPRRYWFYFLRLMVLLDLGLVFLAVALRGSCKKCFCKCVRTASHEVQLRVFPSTKVARTTLEAICDMYSAPRVDPIFIATGVRGCWTGSVSPHQVTEKPVSYSNLDDKKISNKTVVPPPTDPQQAVRCLKVLQCGGSIQDVSVPEVKKVTKVPFKAPFFPNVTIDPECYIVVDPVTYSAAMRGGYGVSHLIVGLGDFAEVNGLRFVSGGQIADFVCLGLYVLLNFLLSAWLSSPVSCGRGTNDPWCRNPFSYPVVGQGVMCNSHLCVAEDGLTSPMTLSYSLIDWALMVAIMATVAIFFAKISLLVDVVCVFCCLLMYAFPSLSIAAFGFPFVLCKVSLHPITLVWVQFFLLAVNVWAGVASVVVLISSWFLARATSSLGLITPYDVHMITATPRGASSLASAPEGTYLAAVRRSALTGRCCMFVPTNFGSVLEGSLRTRGCAKNVVSVFGSASGSGGVFTINGNPVVVTASHLLSDGKARVSCVGFSQCLDFKCAGDYAFARVANWKGDAPKAELSHRRGRAYCSPLVGLSLDLLGKNSAFCFTKCGDSGSPVVDEDGNLLGIHTGSNKRGSGMVTTHGGKTLGMANVKLSEMCPHYSGPGVPVSTVKLPKHLVVDVETVSSDLVAVVESLPALEGALSSMQLLCVFFFLWRLIHVPDVPVIRIAFFFLNEILPVMLARLMFSFALSLFFCVHWLFCSSVAVAFGDCCSKSVTGYSVQVLLLRLVIAALNRPCGPFGFSLLGQLSQCCLMLCLLDIELQLLGCLYLGQLLMWPPKEIFFHPTGQFMFLPLFLSLFKRNALADMLVGNGCFDAAFFLKYFAEGNLRDGVSDSCNMTPEGLTAALAITLSDDDLEFLQRHSEFKCFVSASNMRNGAKEFIESAYARALRAQLAATDKIKASKSILAKLESFAGGVVTQVEPGDVVVVLGKKVIGDLVEVVINDAKHVIRVIETRTMAGTQFSVGTICGDLENACEDPSGLVKTSKKQARRQKRTGLGTEVVGTVVIDGVSYNKVWHIATGDVTYEGCLVTENPQLRPLGMTTIGRFQEFIRKHGEKVKTSVEKYPVGKKKSVEFNITTYLLDGEEYDVPDHEPLEWTITIGESDLEAERLTVDQALRHMGHDSLLTAKEKEKLARIIESLNGLQQASALNCLATSGLDRCTRGGLTVSGDAVKLVRYHSRTFSIGDVNLKVMGREEYGRTVGKQGHCLVANLVDGVVVMRKHEPSLVDVLLTGEDADLISPTHGPGNTGVHGFTWDFEAPPTDLELELSEQIITACSIRRGDAPSLDLPYKLHPVRGNPYRDRGVLYNTRFGDIKYLTPQKTKEPLHAAACFNPKGVPVSDSETLVATTLPHGFELYVPTIPQSVLEYLDSRPMHRKCCVRAVVRGLAECDLQKFDLSRQGFVLPGVLYMVRRYLCRLVGIRRRLFLPSTYPAKNSMAGINGNRFPTHVVQSHPDIDALCERACKEHWQTVTPCTLKKQYCSKAKTRTILGTNNFVALGLRSALSGVTQGFMRKGIGSPICLGKNKFTPLPTKVSGRCLEADLASCDRSTPAIIRWFTTNLLFELAGPEEWIPSYVLNCCHDAVSTMSGCFDKRGGLSSGDPVTSVSNTVYSLVIYAQHMVLSAFRCGHKVGGLFLRDSLEMEQLFELQPLLVYSDDVVLYDESSELPNYHFFVDHLDLMLGFKTDRSKTVITSDPQFPGCRIAAGRVLVPQRDRILAALAYHMKASCVSDYFASAAAILMDACACCDYDEDWYFDLVCGIADCARKEGFRFPGPSFYVDMWKRLSVEEKKKCRTCAHCGAPSTLVSSCGLNLCDYHGHGHPHCPVVLPCGHAVGSGVCDGCSSPVMSLNTELDKLLACVPYHPPKVELLSVNDGVSSLPPGRYQARGGVVSVRRDILGNVVDLPDGDYQVMKVAQTCADICMVSINSHILRSQFITGAPGTGKTTYLLSVVRDDDVIYTPTHRTMLDVVKALGTCRFDPPKDTPLEFPVPSRTGPCVRLIRAGFIPGRVSYLDEAAYCNPLDVLKILSKTPLVCVGDLNQLPPVDFIGPCYAFALMLGRQLIEVFRFGPSIVNPIKKFYREELVSRGPDTGVKFLKSYQPYGQVLTPYHRDRVDGAITIDSSQGCTYDVITVYLPTPKSLNSARALVAITRARFYVFVYDPHNQLEQYLNMSEHEPAGAVAFWCGEQPMMISEGRVQRLSGPAQTTDPKLQQLMGLEGTASPLPQVAHNLGFYYSPDLVQFARIPSELCKHWPVVTAQNRTDWPDRLVCSMSKIDKCSRAIFCAGYHVGPSVFLGVPGVVSYYLTKFLKGKPVPLPDSLMSTGRIALNVREYLDEKEMEFSSRCPHAFIGEVKGSNVGGCHHVTSRYLPPVLVPGSVVKIGVSCPGKAAKELCTVTDVYLPELDPYLNPPTKSMDYKLLVDFQPVKLMVWKDATAYFHEGIRPMESMSRFLKVPQEEGVFFDLDEFVTNAKVSKLPCKYSVSANQFLTDVVLSMTHPSLAPPDYELLFARAYCVPGLDVGTLNAYIYRRGPSTYTTSNIARLVKDICCPVGCKGSGYMFPK.

The C4-type; atypical zinc-finger motif lies at 8–28 (CLCTPNARVFWERGQVYCTRC). The Peptidase C31 domain maps to 69 to 181 (ECRPGGMCWL…KGLCPFADAR (113 aa)). The segment at 69–183 (ECRPGGMCWL…LCPFADARAN (115 aa)) is PCP1-alpha. Catalysis depends on for Nsp1-alpha papain-like cysteine proteinase activity residues cysteine 76 and histidine 147. Residues 262 to 380 (RDTKFSKCWE…KFRFQTRKYY (119 aa)) form a PCP1-beta region. A Peptidase C32 domain is found at 262–381 (RDTKFSKCWE…FRFQTRKYYG (120 aa)). Active-site for Nsp1-beta papain-like cysteine proteinase activity residues include cysteine 269 and histidine 340. The Peptidase C33 domain maps to 381-486 (GYSPPGDGAC…RGVCGECEMG (106 aa)). Catalysis depends on for Nsp2 cysteine proteinase activity residues cysteine 390 and histidine 456. Disordered stretches follow at residues 676-743 (CKPK…AALK) and 865-899 (QQKT…GVSL). Residues 678–689 (PKRKRSRKKKTR) are compositionally biased toward basic residues. 2 stretches are compositionally biased toward basic and acidic residues: residues 714–727 (DTRE…KAEK) and 873–895 (GERE…KRDL). 7 helical membrane passes run 940-960 (WLNH…SFIF), 981-1001 (VLLC…CVFG), 1083-1103 (FYFL…AVAL), 1287-1307 (IADF…SAWL), 1362-1382 (ALMV…SLLV), 1390-1410 (CLLM…PFVL), and 1423-1443 (VQFF…VVLI). Positions 979–1103 (CCVLLCFYLP…LGLVFLAVAL (125 aa)) are HD1. Residues 1287 to 1446 (IADFVCLGLY…ASVVVLISSW (160 aa)) form an HD2 region. In terms of domain architecture, Peptidase S32 spans 1511–1712 (GSLRTRGCAK…AVVESLPALE (202 aa)). Residues histidine 1549, aspartate 1574, and serine 1626 each act as charge relay system; for 3C-like serine proteinase activity in the active site. 5 helical membrane-spanning segments follow: residues 1735 to 1755 (DVPV…VMLA), 1761 to 1781 (FALS…AVAF), 1801 to 1821 (LVIA…LGQL), 1824 to 1844 (CCLM…LYLG), and 1853 to 1873 (EIFF…SLFK). An HD3 region spans residues 1735–1872 (DVPVIRIAFF…MFLPLFLSLF (138 aa)). One can recognise a NiRAN domain in the interval 2214–2372 (SLNGLQQASA…LPYKLHPVRG (159 aa)). In terms of domain architecture, RdRp catalytic spans 2611 to 2745 (GRCLEADLAS…YDESSELPNY (135 aa)). The AV ZBD domain occupies 2865–2928 (KKKCRTCAHC…SPVMSLNTEL (64 aa)). The Zn(2+) site is built by cysteine 2871, cysteine 2874, cysteine 2884, cysteine 2889, histidine 2892, histidine 2894, histidine 2896, histidine 2898, cysteine 2905, histidine 2907, cysteine 2914, and cysteine 2917. The (+)RNA virus helicase ATP-binding domain occupies 2985–3137 (QVMKVAQTCA…AFALMLGRQL (153 aa)). ATP is bound at residue 3013 to 3020 (GAPGTGKT). The (+)RNA virus helicase C-terminal domain maps to 3138–3269 (IEVFRFGPSI…CGEQPMMISE (132 aa)). Positions 3293–3389 (EGTASPLPQV…LTKFLKGKPV (97 aa)) constitute an AV-Nsp11N/CoV-Nsp15M domain. In terms of domain architecture, NendoU spans 3391-3513 (LPDSLMSTGR…MVWKDATAYF (123 aa)). Residues histidine 3422, histidine 3437, and lysine 3466 contribute to the active site.

This sequence belongs to the arteriviridae polyprotein family. In terms of processing, specific enzymatic cleavages in vivo by its own proteases yield mature proteins. There are two alternative pathways for processing. Either nsp4-5 is cleaved, which represents the major pathway or the nsp5-6 and nsp6-7 are processed, which represents the minor pathway. The major pathway occurs when nsp2 acts as a cofactor for nsp4.

The protein localises to the host membrane. It localises to the host cytoplasm. The protein resides in the host perinuclear region. The catalysed reaction is RNA(n) + a ribonucleoside 5'-triphosphate = RNA(n+1) + diphosphate. The enzyme catalyses ATP + H2O = ADP + phosphate + H(+). It carries out the reaction uridylyl-uridylyl-ribonucleotide-RNA = a 3'-end uridylyl-2',3'-cyclophospho-uridine-RNA + a 5'-end dephospho-ribonucleoside-RNA. Its function is as follows. The replicase polyprotein 1ab is a multifunctional protein: it contains the activities necessary for the transcription of negative stranded RNA, leader RNA, subgenomic mRNAs and progeny virion RNA as well as proteinases responsible for the cleavage of the polyprotein into functional products. In terms of biological role, the Nsp1 chain is essential for viral subgenomic mRNA synthesis. Functionally, the 3C-like serine proteinase chain is responsible for the majority of cleavages as it cleaves the C-terminus of the polyprotein. The helicase chain, which contains a zinc finger structure, displays RNA and DNA duplex-unwinding activities with 5' to 3' polarity. Its function is as follows. Plays a role in viral transcription/replication and prevents the simultaneous activation of host cell dsRNA sensors, such as MDA5/IFIH1, OAS, and PKR. Acts by degrading the 5'-polyuridines generated during replication of the poly(A) region of viral genomic and subgenomic RNAs. Catalyzes a two-step reaction in which a 2'3'-cyclic phosphate (2'3'-cP) is first generated by 2'-O transesterification, which is then hydrolyzed to a 3'-phosphate (3'-P). If not degraded, poly(U) RNA would hybridize with poly(A) RNA tails and activate host dsRNA sensors. The sequence is that of Replicase polyprotein 1ab (rep) from Mus musculus domesticus (western European house mouse).